The chain runs to 411 residues: Formate-dependent phosphoribosylglycinamide formyltransferase (411 aa).

Position 25–26 (25–26) interacts with N(1)-(5-phospho-beta-D-ribosyl)glycinamide; sequence EL. Residues arginine 118, lysine 159, 164 to 169, 199 to 202, and glutamate 207 each bind ATP; these read SSGAGQ and EQYI. Residues 123–318 form the ATP-grasp domain; sequence TFAHDKLGLP…EFDLHARAIL (196 aa). The Mg(2+) site is built by glutamate 277 and glutamate 289. Residues aspartate 296, lysine 366, and 373–374 each bind N(1)-(5-phospho-beta-D-ribosyl)glycinamide; that span reads RR.

This sequence belongs to the PurK/PurT family. In terms of assembly, homodimer.

It catalyses the reaction N(1)-(5-phospho-beta-D-ribosyl)glycinamide + formate + ATP = N(2)-formyl-N(1)-(5-phospho-beta-D-ribosyl)glycinamide + ADP + phosphate + H(+). It participates in purine metabolism; IMP biosynthesis via de novo pathway; N(2)-formyl-N(1)-(5-phospho-D-ribosyl)glycinamide from N(1)-(5-phospho-D-ribosyl)glycinamide (formate route): step 1/1. Functionally, involved in the de novo purine biosynthesis. Catalyzes the transfer of formate to 5-phospho-ribosyl-glycinamide (GAR), producing 5-phospho-ribosyl-N-formylglycinamide (FGAR). Formate is provided by PurU via hydrolysis of 10-formyl-tetrahydrofolate. The sequence is that of Formate-dependent phosphoribosylglycinamide formyltransferase from Corynebacterium jeikeium (strain K411).